Reading from the N-terminus, the 411-residue chain is Alpha-1-antiproteinase (411 aa).

Residues 1–24 (MAPSISRGLLLLAALCCLAPSFLA) form the signal peptide. Ser-33 bears the Phosphoserine mark. 3 N-linked (GlcNAc...) asparagine glycosylation sites follow: Asn-64, Asn-101, and Asn-265. The segment at 367–386 (GATVVEAVPMSLPPQVKFDH) is RCL. Ser-377 carries the phosphoserine modification.

This sequence belongs to the serpin family. In terms of assembly, interacts with CELA2A. Interacts with ERGIC3 and LMAN1/ERGIC53. Interacts with PRSS1/Trypsin. Plasma.

The protein localises to the secreted. Its function is as follows. Inhibitor of serine proteases. The primary target is elastase, but also has a moderate affinity for plasmin and thrombin. This is Alpha-1-antiproteinase (Serpina1) from Rattus norvegicus (Rat).